Consider the following 236-residue polypeptide: Elastase-1 (236 aa).

The region spanning 1–236 (VVGGRVAQPN…AYISWMNGIM (236 aa)) is the Peptidase S1 domain. An intrachain disulfide couples cysteine 30 to cysteine 46. Histidine 45 acts as the Charge relay system in catalysis. The Ca(2+) site is built by glutamate 59, asparagine 61, threonine 64, glutamate 66, and glutamate 69. Catalysis depends on aspartate 93, which acts as the Charge relay system. Disulfide bonds link cysteine 127–cysteine 193, cysteine 158–cysteine 174, and cysteine 183–cysteine 213. The active-site Charge relay system is serine 187.

The protein belongs to the peptidase S1 family. Elastase subfamily. The cofactor is Ca(2+). Pancreas.

It localises to the secreted. The enzyme catalyses Hydrolysis of proteins, including elastin. Preferential cleavage: Ala-|-Xaa.. Functionally, acts upon elastin. The chain is Elastase-1 from Salmo salar (Atlantic salmon).